The primary structure comprises 222 residues: Protein ORM1 (222 aa).

Residues 1–57 form a disordered region; the sequence is MTELDYQGTAEAASTSYSRNQTDLKPFPSAGSASSSIKTTEPVKDHRRRRSSSIISH. Topologically, residues 1-85 are cytoplasmic; the sequence is MTELDYQGTA…NATWVDQRGA (85 aa). Positions 12 to 23 are enriched in polar residues; it reads AASTSYSRNQTD. Phosphoserine occurs at positions 29, 32, and 56. The helical transmembrane segment at 86–106 threads the bilayer; that stretch reads WIIHVVIIILLKLFYNLFPGV. Topologically, residues 107–109 are extracellular; the sequence is TTE. The helical transmembrane segment at 110 to 130 threads the bilayer; sequence WSWTLTNMTYVIGSYVMFHLI. The Cytoplasmic segment spans residues 131–162; that stretch reads KGTPFDFNGGAYDNLTMWEQIDDETLYTPSRK. A helical transmembrane segment spans residues 163 to 183; it reads FLISVPIALFLVSTHYAHYDL. Lys-184 is a topological domain (extracellular). Residues 185–205 form a helical membrane-spanning segment; the sequence is LFSWNCFLTTFGAVVPKLPVT. Topologically, residues 206 to 222 are cytoplasmic; that stretch reads HRLRISIPGITGRAQIS.

This sequence belongs to the ORM family. Component of the SPOTS complex, at least composed of LCB1/2 (LCB1 and/or LCB2), ORM1/2 (ORM1 and/or ORM2), SAC1 and TSC3. Phosphorylated in case of disruption of sphingolipid synthesis. Phosphorylation regulates inhibitory activity of serine palmitoyltransferases (LCB1 and LCB2).

It localises to the endoplasmic reticulum membrane. Component of the SPOTS complex that acts as a negative regulator of sphingolipid synthesis. Acts by inhibiting serine palmitoyltransferases (LCB1 and LCB2) activity. Along with ORM2, plays a role in the phosphorylation of LAC1 and YPK1, the distribution of actin patches between mother and daughter cells, and in endocytosis. Disruption or inhibition of sphingolipid synthesis leads to the activation and phosphorylation of YPK1 through the TORC2 and PKH1 pathways, which in turn phosphorylates ORM1 and LAG1 to activate sphingolipid synthesis. This is Protein ORM1 (ORM1) from Saccharomyces cerevisiae (strain ATCC 204508 / S288c) (Baker's yeast).